The sequence spans 957 residues: MPGIIYILCSILLIESQYYVASENAEIRSSCRTAPNDLVFILDGSWSVGPENFEILKKWVVNITSNFNIGPKFTQVGVVQYSDYPILEIPLGSYESIDDLSRRTQSIQYLGGNTQTGNAIQFAIDNLFARSLRPLTKIAIVLTDGKSQDDVKHIAEEARKNKITLFAIGVGSEIEESELRAIANKPSSTYVFYVEDYIAISRIREIMKQKLCEESVCPTRIPVAARDEKGFDILLGLGINKKKAKRVEGSRPRNKAYEITSQIDLTEFTGNVFPEGLPPSYVFISTLRFKIKKKWDLWRILALDGTIQTAVSLNGEEKTLSFTTTNEENGTQAITFTTPGVKKLFDEEWHQIRLLVTEEDITLYVDDQEIETRKLLPVIGIYISGQTQIGKYPAREESVQFTLQKLRIYCDPEQNKRETACEIPGTNGECLNGPSDVGGTPAPCICPPGEKGDPGPKGDSGQPGNPGSPGQPGPDGKHGFQGTSGSPGIPGSPGVQGPRGFAGLKGNTGQDGEKGDRGMPGFPGLHGQPGIKGEMGPKGDKGDIGIDGKKGTKGDKGGNGATGKPGRHGEPGSYGKDGIPGYPGQKGEEGKPGPPGMEGLRGLPGIPGIPGNDGANGLKGETGLSGEPGARGPTGTPGISGPEGISGPQGPVGPKGNKGETGPPGKASPAGMKGEKGEMGIPGQQGYTGIPGLMGPKGDKGNLGERGMQGHKGEHGSSGMPGLKGEHGVTGSKGEKGEIGEHGHRGITGPRGEPGNMGLIGAPGPRGMSGERGTQGLPGPKGQQGKEQSEAFIRQICLDVLKAQLPSLIQNDIRQNCNQCKTQEGSPGLPGPPGPVGPEGTRGHPGLPGRNGFSGLVGQPGLPGIPGTKGLPGKPGAKGNKGDIEPGPQGSPGVPGPAGLPGVGKDGRTGPLGPPGREGDRGPPGTQGPPGDAGICDPSLCYGAVMRRDPFRKGPNY.

The signal sequence occupies residues 1–16; sequence MPGIIYILCSILLIES. The VWFA domain maps to 37–211; it reads DLVFILDGSW…RIREIMKQKL (175 aa). The Laminin G-like domain maps to 230-412; it reads GFDILLGLGI…LQKLRIYCDP (183 aa). Disordered stretches follow at residues 441–788 and 820–935; these read PAPC…GKEQ and CKTQ…DAGI. Collagen-like domains are found at residues 448–501, 502–543, 544–591, 592–642, 643–684, 685–741, 742–786, and 825–882; these read PGEK…PRGF, AGLK…DKGD, IGID…EEGK, PGPP…ISGP, EGIS…IPGQ, QGYT…EIGE, HGHR…QQGK, and GSPG…GNKG. A compositionally biased stretch (low complexity) spans 483-498; it reads TSGSPGIPGSPGVQGP. Basic and acidic residues predominate over residues 535–556; it reads MGPKGDKGDIGIDGKKGTKGDK. Composition is skewed to low complexity over residues 597–616 and 633–649; these read MEGL…DGAN and PTGT…SGPQ. The segment covering 733 to 744 has biased composition (basic and acidic residues); the sequence is KGEKGEIGEHGH. Positions 775–786 are enriched in low complexity; the sequence is QGLPGPKGQQGK.

This sequence belongs to the fibril-associated collagens with interrupted helices (FACIT) family.

It is found in the secreted. Its subcellular location is the extracellular space. The protein resides in the extracellular matrix. It localises to the cytoplasm. This is Collagen alpha-1(XXI) chain (col21a1) from Xenopus laevis (African clawed frog).